A 615-amino-acid polypeptide reads, in one-letter code: Sodium-dependent noradrenaline transporter (615 aa).

The interval 1–28 (MLLARMNPQVQPENGGAGPGSEQPPRKR) is disordered. Over 1–60 (MLLARMNPQVQPENGGAGPGSEQPPRKRKEVLVVKERNGVQCLLASRDGDEQPRETWGKK) the chain is Cytoplasmic. Residues 61-86 (IDFLLSVVGFAVDLANVWRFPYLCYK) form a helical membrane-spanning segment. 3 residues coordinate Na(+): Gly-69, Ala-71, and Val-72. Asp-73 lines the (R)-noradrenaline pocket. Asp-73 lines the dopamine pocket. Asn-76 contributes to the Na(+) binding site. 2 residues coordinate (R)-noradrenaline: Tyr-85 and Lys-86. The Extracellular segment spans residues 87–90 (NGGG). A helical transmembrane segment spans residues 91-114 (AFLIPYTLFLIIAGMPLFYMELAL). Topologically, residues 115–133 (GQYNREGAATVWKICPFFK) are cytoplasmic. The chain crosses the membrane as a helical span at residues 134–164 (GVGYAVILIALYVGFYYNVIIAWSLYYLFSS). Residues Ala-143 and Gly-147 each coordinate (R)-noradrenaline. Ala-143 provides a ligand contact to dopamine. Residues 165 to 231 (FTPTLPWTDC…SSGIHDIGLP (67 aa)) lie on the Extracellular side of the membrane. Cys-174 and Cys-183 form a disulfide bridge. N-linked (GlcNAc...) asparagine glycosylation is found at Asn-182, Asn-190, and Asn-196. A helical membrane pass occupies residues 232-252 (QWQLLLCLIIVVIVLFFSLWK). Topologically, residues 253–255 (GVK) are cytoplasmic. A helical membrane pass occupies residues 256–280 (TSGKVVWITATLPYLVLFVLLVHGI). At 281–304 (TLPGASNGINAYLHIDFYRLKEAT) the chain is on the extracellular side. A helical membrane pass occupies residues 305 to 330 (VWIDAATQIFFSLGAGFGVLIAFASY). Phe-315 lines the (R)-noradrenaline pocket. Residue Phe-315 participates in dopamine binding. Residue Ser-316 coordinates Na(+). Residues 331–336 (NKFDNN) lie on the Cytoplasmic side of the membrane. Residues 337 to 360 (CYRDALLTSTINCVTSFISGFAIF) traverse the membrane as a helical segment. Residue Asn-348 participates in Na(+) binding. The Extracellular segment spans residues 361–400 (SILGYMAHEHKVNIEDVATEGAGLVFILYPEAISTLSGST). A (R)-noradrenaline-binding site is contributed by Glu-380. Glu-380 contributes to the dopamine binding site. Residues 401 to 426 (FWAIVFFIMLLALGIDSSMGGMEAVI) traverse the membrane as a helical segment. Residues Asp-416 and Ser-417 each contribute to the Na(+) site. Topologically, residues 427–441 (TGLADDFQVLKRHRK) are cytoplasmic. The chain crosses the membrane as a helical span at residues 442–462 (LFTFAVSFGTFLLALFCITKG). Gly-463 is a topological domain (extracellular). Residues 464–490 (IYVLTLLDTFAAGTSILFAVLMEAIGV) form a helical membrane-spanning segment. Topologically, residues 491–520 (SWFYGVDRFSNDIQQMMGFKPGLYWRLCWK) are cytoplasmic. The helical transmembrane segment at 521-543 (FVSPAFLLFVVIVSIINFKPLTY) threads the bilayer. Residues 544–546 (DDY) are Extracellular-facing. The chain crosses the membrane as a helical span at residues 547 to 567 (IFPLWANWVGWGIAGSSMVLV). Topologically, residues 568 to 615 (PAYIVYKFFSTRGSIRERLAYGITPASEHHLVAQRDIRQFQLQHWLAI) are cytoplasmic.

Belongs to the sodium:neurotransmitter symporter (SNF) (TC 2.A.22) family. SLC6A2 subfamily. As to quaternary structure, monomer. Can form homodimers in the cell membrane; homodimerization is mostly mediated by cholesterol and lipids, and regulates neurotransmitter transport activity. Interacts with PRKCABP. Palmitoylated. Palmitoylation regulates protein levels and neurotransmitter transport.

It is found in the cell membrane. Its subcellular location is the cell projection. The protein localises to the axon. It localises to the synapse. The protein resides in the synaptosome. It catalyses the reaction (R)-noradrenaline(out) + chloride(out) + Na(+)(out) = (R)-noradrenaline(in) + chloride(in) + Na(+)(in). The enzyme catalyses dopamine(out) + chloride(out) + Na(+)(out) = dopamine(in) + chloride(in) + Na(+)(in). The catalysed reaction is dopamine(out) + chloride(out) + 2 Na(+)(out) = dopamine(in) + chloride(in) + 2 Na(+)(in). Its activity is regulated as follows. Inhibited by nisoxetine, oxaprotiline and desipramin. Mediates sodium- and chloride-dependent transport of norepinephrine (also known as noradrenaline), the primary signaling neurotransmitter in the autonomic sympathetic nervous system. Is responsible for norepinephrine re-uptake and clearance from the synaptic cleft, thus playing a crucial role in norepinephrine inactivation and homeostasis. Can also mediate sodium- and chloride-dependent transport of dopamine. The chain is Sodium-dependent noradrenaline transporter (SLC6A2) from Bos taurus (Bovine).